Here is a 531-residue protein sequence, read N- to C-terminus: Transcription termination/antitermination protein NusA (531 aa).

Positions 165–235 (GEVIEAKVED…SLWPITLSRS (71 aa)) constitute an S1 motif domain. The 71-residue stretch at 340-410 (DTSIEVVVPA…FGIKKRREKI (71 aa)) folds into the KH domain. A compositionally biased stretch (basic and acidic residues) spans 463 to 475 (EKQVTPKEKEKVQ). A disordered region spans residues 463–531 (EKQVTPKEKE…KQTFDSFDDL (69 aa)). Over residues 476 to 490 (PKAKVHSNSHSKKPA) the composition is skewed to basic residues. Residues 502-512 (ASDKNLKKDQV) show a composition bias toward basic and acidic residues. Polar residues predominate over residues 513 to 531 (DNNQTNPQTKQTFDSFDDL).

This sequence belongs to the NusA family. As to quaternary structure, monomer. Binds directly to the core enzyme of the DNA-dependent RNA polymerase and to nascent RNA.

It is found in the cytoplasm. Its function is as follows. Participates in both transcription termination and antitermination. In Mycoplasma genitalium (strain ATCC 33530 / DSM 19775 / NCTC 10195 / G37) (Mycoplasmoides genitalium), this protein is Transcription termination/antitermination protein NusA.